The primary structure comprises 506 residues: Anaerobic nitric oxide reductase transcription regulator NorR (506 aa).

Asp57 carries the 4-aspartylphosphate modification. A Sigma-54 factor interaction domain is found at 187-416; it reads MIGLSPAMTQ…LEHAIHRAVV (230 aa). ATP is bound by residues 215–222 and 278–287; these read GETGTGKE and ADNGTLFLDE. Positions 481–500 form a DNA-binding region, H-T-H motif; the sequence is WAASARALETDVANLHRLAK.

Its pathway is nitrogen metabolism; nitric oxide reduction. In terms of biological role, required for the expression of anaerobic nitric oxide (NO) reductase, acts as a transcriptional activator for at least the norVW operon. Activation also requires sigma-54. The protein is Anaerobic nitric oxide reductase transcription regulator NorR of Salmonella heidelberg (strain SL476).